We begin with the raw amino-acid sequence, 112 residues long: Late expression factor 11 (112 aa).

Belongs to the baculoviridae LEF-11 family.

Involved in late/very late gene activation. This is Late expression factor 11 (LEF-11) from Helicoverpa zea (Corn earworm moth).